Here is a 48-residue protein sequence, read N- to C-terminus: Small, acid-soluble spore protein N (48 aa).

Positions 1–48 (MMGREHDKQAQFTPDHLGTKPVAYKRNKGKKMHNKSNEQPDVIQTKGE) are disordered. Positions 23 to 34 (AYKRNKGKKMHN) are enriched in basic residues.

It belongs to the SspN family.

Its subcellular location is the spore core. The polypeptide is Small, acid-soluble spore protein N (Bacillus pumilus (strain SAFR-032)).